Consider the following 409-residue polypeptide: Spermatogenesis-associated protein 2-like protein (409 aa).

Disordered regions lie at residues 233–257, 270–299, and 313–337; these read EDEG…TSEL, LWGA…PQPE, and RPGD…IPEP.

It belongs to the SPATA2 family.

This Bos taurus (Bovine) protein is Spermatogenesis-associated protein 2-like protein (SPATA2L).